A 145-amino-acid polypeptide reads, in one-letter code: uncharacterized protein (145 aa).

Residue M1 is modified to N-acetylmethionine. The disordered stretch occupies residues 15–41 (QLKNNSGGTNGDRNSGANNGGGENSAP). Polar residues predominate over residues 16-27 (LKNNSGGTNGDR). 2 positions are modified to phosphoserine: S121 and S126. Residues 125-145 (NSFDKQNAKNDDDEDDDDFFD) form a disordered region. Positions 135-145 (DDDEDDDDFFD) are enriched in acidic residues.

Belongs to the PDCD5 family.

This is an uncharacterized protein from Saccharomyces cerevisiae (strain ATCC 204508 / S288c) (Baker's yeast).